The primary structure comprises 481 residues: Arylsulfatase (481 aa).

Ca(2+)-binding residues include Asp-11, Gln-12, and Cys-51. Cys-51 serves as the catalytic Nucleophile. Residue Cys-51 is modified to 3-oxoalanine (Cys). Residue His-102 is part of the active site. Ca(2+)-binding residues include Asp-302 and His-303.

The protein belongs to the sulfatase family. The cofactor is Ca(2+). In terms of processing, the conversion to 3-oxoalanine (also known as C-formylglycine, FGly), of a serine or cysteine residue in prokaryotes and of a cysteine residue in eukaryotes, is critical for catalytic activity.

It catalyses the reaction an aryl sulfate + H2O = a phenol + sulfate + H(+). In terms of biological role, has sulfatase activity toward para-nitrophenyl sulfate, which is increased in presence of calcium ion. This is Arylsulfatase from Clostridium perfringens (strain 13 / Type A).